Consider the following 423-residue polypeptide: Core protease OPG083 (423 aa).

Residues His-241, Asp-248, and Cys-328 contribute to the active site.

The protein belongs to the peptidase C57 family.

It is found in the virion. Functionally, late protein responsible for processing most or all of the viral core and membrane proteins known to undergo morphogenesis-associated proteolysis. These proteolytic events are involved in the transformation of immature virions (IV) into mature virions (MV). Probably cleaves at least the OPG129/A3, OPG136/A10, OPG098/L4, and OPG144/A17 precursors preferentially at Ala-Gly-|-Ala motifs. Also seems to process Ala-Gly-|-Ser and Ala-Gly-|-Thr motifs. This Bos taurus (Bovine) protein is Core protease OPG083 (OPG083).